Consider the following 268-residue polypeptide: Acyl-CoA-binding domain-containing protein 4 (268 aa).

The ACB domain occupies 12–101 (CQKQFQAAVS…MKLVAQKVID (90 aa)). An acyl-CoA-binding positions include 23-32 (IQNLPKNGSY), 43-47 (YSYYK), Lys-69, and Tyr-88. Residues 151–175 (AVSEPPCLPKEPAPPSPESHSPRDL) form a disordered region. Pro residues predominate over residues 156 to 167 (PCLPKEPAPPSP). Residues Ser-166 and Ser-171 each carry the phosphoserine modification.

Binds medium- and long-chain acyl-CoA esters and may function as an intracellular carrier of acyl-CoA esters. The polypeptide is Acyl-CoA-binding domain-containing protein 4 (ACBD4) (Homo sapiens (Human)).